Here is a 365-residue protein sequence, read N- to C-terminus: WAT1-related protein At1g01070 (365 aa).

The next 10 membrane-spanning stretches (helical) occupy residues 14–34, 46–66, 83–103, 107–127, 139–159, 189–209, 221–241, 255–275, 285–305, and 310–330; these read YSPV…NALV, VIGA…AYVL, FVSG…GLSY, TVSC…ALIF, AGML…FLTF, WLLG…WMLF, YSST…LSLY, FVIT…TVAT, VFAS…DFLI, and LYLG…MFLW. Residues 27–157 form the EamA 1 domain; it reads MGSVNALVKK…LICISGALFL (131 aa). Positions 223-329 constitute an EamA 2 domain; it reads STCLMSIFAA…VTITGLYMFL (107 aa). Positions 340–356 are enriched in polar residues; sequence TALSSGMDNEAQYTTPN. The disordered stretch occupies residues 340-365; that stretch reads TALSSGMDNEAQYTTPNKDNDSKSPV.

It belongs to the drug/metabolite transporter (DMT) superfamily. Plant drug/metabolite exporter (P-DME) (TC 2.A.7.4) family.

It is found in the membrane. The polypeptide is WAT1-related protein At1g01070 (Arabidopsis thaliana (Mouse-ear cress)).